The following is a 194-amino-acid chain: Amidophosphoribosyltransferase (194 aa).

Positions 1–11 (MPHEPKGLNEE) are excised as a propeptide. Cys-12 serves as the catalytic Nucleophile. A Glutamine amidotransferase type-2 domain is found at 12–194 (CGVFGVWGNP…PHGFRPMVVG (183 aa)).

It in the C-terminal section; belongs to the purine/pyrimidine phosphoribosyltransferase family.

It carries out the reaction 5-phospho-beta-D-ribosylamine + L-glutamate + diphosphate = 5-phospho-alpha-D-ribose 1-diphosphate + L-glutamine + H2O. It participates in purine metabolism; IMP biosynthesis via de novo pathway; N(1)-(5-phospho-D-ribosyl)glycinamide from 5-phospho-alpha-D-ribose 1-diphosphate: step 1/2. In terms of biological role, catalyzes the formation of phosphoribosylamine from phosphoribosylpyrophosphate (PRPP) and glutamine. The sequence is that of Amidophosphoribosyltransferase from Lacticaseibacillus casei (Lactobacillus casei).